A 194-amino-acid chain; its full sequence is Leucyl/phenylalanyl-tRNA--protein transferase (194 aa).

It belongs to the L/F-transferase family.

Its subcellular location is the cytoplasm. The catalysed reaction is N-terminal L-lysyl-[protein] + L-leucyl-tRNA(Leu) = N-terminal L-leucyl-L-lysyl-[protein] + tRNA(Leu) + H(+). It carries out the reaction N-terminal L-arginyl-[protein] + L-leucyl-tRNA(Leu) = N-terminal L-leucyl-L-arginyl-[protein] + tRNA(Leu) + H(+). The enzyme catalyses L-phenylalanyl-tRNA(Phe) + an N-terminal L-alpha-aminoacyl-[protein] = an N-terminal L-phenylalanyl-L-alpha-aminoacyl-[protein] + tRNA(Phe). Functions in the N-end rule pathway of protein degradation where it conjugates Leu, Phe and, less efficiently, Met from aminoacyl-tRNAs to the N-termini of proteins containing an N-terminal arginine or lysine. This Prosthecochloris aestuarii (strain DSM 271 / SK 413) protein is Leucyl/phenylalanyl-tRNA--protein transferase.